The chain runs to 197 residues: Small ribosomal subunit protein uS5 (197 aa).

A compositionally biased stretch (basic and acidic residues) spans 1–17 (MAERENRGRGRGRNREE). Disordered regions lie at residues 1–22 (MAER…TPEF) and 158–197 (NESS…SEEA). One can recognise an S5 DRBM domain in the interval 22 to 85 (FADRLVAINR…EQAKRQLIRV (64 aa)). Over residues 172–186 (KVADILPKRDDHPQI) the composition is skewed to basic and acidic residues.

This sequence belongs to the universal ribosomal protein uS5 family. As to quaternary structure, part of the 30S ribosomal subunit. Contacts proteins S4 and S8.

With S4 and S12 plays an important role in translational accuracy. Functionally, located at the back of the 30S subunit body where it stabilizes the conformation of the head with respect to the body. The chain is Small ribosomal subunit protein uS5 from Jannaschia sp. (strain CCS1).